A 2338-amino-acid chain; its full sequence is Proto-oncogene tyrosine-protein kinase ROS (2338 aa).

The signal sequence occupies residues 1 to 27 (MKRIRWLTPKPATFVVLGCVWISVAQG). The Extracellular portion of the chain corresponds to 28-1853 (TILSSCLTSC…EDGFWITETS (1826 aa)). N-linked (GlcNAc...) asparagine glycans are attached at residues Asn-52 and Asn-77. 2 Fibronectin type-III domains span residues 110-205 (LPTA…VPET) and 206-294 (APFI…PSPA). N-linked (GlcNAc...) asparagine glycosylation is found at Asn-333, Asn-361, Asn-480, Asn-623, Asn-934, and Asn-1010. The 101-residue stretch at 566 to 666 (LPGHPQEVSV…EPSVGTTLVP (101 aa)) folds into the Fibronectin type-III 3 domain. Fibronectin type-III domains lie at 942–1037 (IPDS…SVPS) and 1038–1145 (APEN…TSEI). Asn-1298 carries an N-linked (GlcNAc...) asparagine glycan. Fibronectin type-III domains follow at residues 1440–1548 (VASN…TKSG), 1549–1648 (VPGA…VNMF), 1650–1743 (TPEK…TKAG), and 1744–1845 (VPSK…LVED). Asn-1675 is a glycosylation site (N-linked (GlcNAc...) asparagine). The helical transmembrane segment at 1854-1874 (FILTIIVGIFLVATVPLTFVW) threads the bilayer. Residues 1875 to 2338 (HRSLKNHKAT…AHSGHGDVSE (464 aa)) lie on the Cytoplasmic side of the membrane. Residues 1937–2210 (LSLRLLLGSG…YNIQDQLQLF (274 aa)) enclose the Protein kinase domain. ATP is bound by residues 1943–1951 (LGSGAFGEV) and Lys-1972. Asp-2071 acts as the Proton acceptor in catalysis. Tyr-2266 carries the phosphotyrosine; by autocatalysis modification. A disordered region spans residues 2277–2314 (EDRYEGPLGSKESGLHDLKKDERQPADKDFCQQPQVAY). The span at 2289–2306 (SGLHDLKKDERQPADKDF) shows a compositional bias: basic and acidic residues. Tyr-2325 carries the phosphotyrosine; by autocatalysis modification.

The protein belongs to the protein kinase superfamily. Tyr protein kinase family. Insulin receptor subfamily. Interacts with PTPN11; may activate the PI3 kinase-mTOR signaling pathway. Interacts with VAV3; constitutive interaction mediating VAV3 phosphorylation. Interacts with PTPN6 (via SH2 1 domain); the interaction is direct and promotes ROS1 dephosphorylation. Phosphorylated. Probably autophosphorylates. Phosphorylation at Tyr-2266 is required for the interaction with PTPN6 that mediates ROS1 dephosphorylation. Phosphorylation at Tyr-2266 stimulates the kinase activity and the activation of the ERK1 signaling cascade. Phosphorylation at Tyr-2266 and/or Tyr-2325 recruits PTPN11. Expressed in heart, lung, kidney and testis.

It localises to the cell membrane. The enzyme catalyses L-tyrosyl-[protein] + ATP = O-phospho-L-tyrosyl-[protein] + ADP + H(+). Its activity is regulated as follows. Inhibited by dephosphorylation by PTPN6. Its function is as follows. Orphan receptor tyrosine kinase (RTK) that plays a role in epithelial cell differentiation and regionalization of the proximal epididymal epithelium. NELL2 is an endogenous ligand for ROS1. Upon endogenous stimulation by NELL2, ROS1 activates the intracellular signaling pathway and triggers epididymal epithelial differentiation and subsequent sperm maturation. May activate several downstream signaling pathways related to cell differentiation, proliferation, growth and survival including the PI3 kinase-mTOR signaling pathway. Mediates the phosphorylation of PTPN11, an activator of this pathway. May also phosphorylate and activate the transcription factor STAT3 to control anchorage-independent cell growth. Mediates the phosphorylation and the activation of VAV3, a guanine nucleotide exchange factor regulating cell morphology. May activate other downstream signaling proteins including AKT1, MAPK1, MAPK3, IRS1 and PLCG2. This is Proto-oncogene tyrosine-protein kinase ROS (Ros1) from Rattus norvegicus (Rat).